The primary structure comprises 116 residues: Proline-rich protein 9 (116 aa).

This is Proline-rich protein 9 (PRR9) from Homo sapiens (Human).